The following is a 552-amino-acid chain: DnaJ homolog subfamily C member 1 (552 aa).

Positions 1–43 are cleaved as a signal peptide; that stretch reads MWVPGFGSARLPQRRRSGLESSSVRPLWLLLLFLLAAVRPVRA. Residues 44–149 lie on the Lumenal side of the membrane; that stretch reads WESGDLELFD…RRVRKMSNAE (106 aa). One can recognise a J domain in the interval 56-129; it reads EEVQLNFYEF…RYDDVLINGL (74 aa). The helical transmembrane segment at 150–170 threads the bilayer; that stretch reads LALLLFIILTVGHYAVVWSIY. Residues 171–552 are Cytoplasmic-facing; sequence LEKQLDELLG…LVQKKKQAKS (382 aa). Residues 323–377 form the SANT 1 domain; that stretch reads RQAPEWTEEDLSQLTRSMVKFPGGTPGRWDKIAHELGRSVTDVTTKAKELKDSVT. The tract at residues 370–495 is disordered; sequence KELKDSVTSS…ERTRAAEEAW (126 aa). Phosphoserine is present on S379. Positions 419 to 431 are enriched in acidic residues; the sequence is MEDEEHEAAEGEQ. The span at 453-470 shows a compositional bias: basic and acidic residues; sequence TRVEPEEKLRGKRQKDFD. Phosphoserine is present on residues S477 and S478. The span at 480-492 shows a compositional bias: basic and acidic residues; the sequence is EEKQRKERTRAAE. Residues 490-545 enclose the SANT 2 domain; that stretch reads AAEEAWTQSQQKLLELALQQYPKGASDRWDKIAKCVPSKSKEDCIARYKLLVELVQ.

Interacts (via J domain) with HSPA5. Interacts (via cytosolic domain) with ribosomes. Interacts (via SANT 2 domain) with SERPINA3; the interaction delays the formation of the covalent inhibitory complex SERPINA3-chymotrypsin, but does not alter the catalytic activity of SERPINA3. Interacts (via SANT 2 domain) with ITIH4 (via C-terminus); the interaction protects ITIH4 against in vitro cleavage by kallikrein. In terms of tissue distribution, widely expressed.

The protein localises to the endoplasmic reticulum membrane. It is found in the nucleus membrane. Its subcellular location is the microsome membrane. Its function is as follows. May modulate protein synthesis. The sequence is that of DnaJ homolog subfamily C member 1 (Dnajc1) from Mus musculus (Mouse).